Here is a 391-residue protein sequence, read N- to C-terminus: Probable sugar efflux transporter (391 aa).

A run of 12 helical transmembrane segments spans residues 16-36 (VFVF…PVAL), 51-71 (VGLM…PLML), 82-102 (LLFL…AWNF), 103-123 (WVLL…WSIT), 138-158 (QALG…LPLG), 171-191 (FGVI…LLPP), 210-230 (PLLM…FTTY), 247-267 (ITTL…FLFG), 277-297 (FIAF…VFKN), 300-320 (WVIF…TIAL), 338-358 (IFSG…SIVI), and 361-381 (LGLG…LFWL).

The protein belongs to the major facilitator superfamily. SotB (TC 2.A.1.2) family.

The protein resides in the cell inner membrane. Functionally, involved in the efflux of sugars. The physiological role may be the reduction of the intracellular concentration of toxic sugars or sugar metabolites. This chain is Probable sugar efflux transporter, found in Helicobacter pylori (strain G27).